The following is a 91-amino-acid chain: Putative regulatory protein PTH_1796 (91 aa).

This sequence belongs to the RemA family.

This is Putative regulatory protein PTH_1796 from Pelotomaculum thermopropionicum (strain DSM 13744 / JCM 10971 / SI).